The sequence spans 342 residues: Fructose-1,6-bisphosphatase class 1 (342 aa).

The Mg(2+) site is built by Glu-97, Asp-119, Leu-121, and Asp-122. Residues 122-125 (DGSS), Asn-215, Tyr-247, and Lys-280 each bind substrate. Residue Glu-286 participates in Mg(2+) binding.

This sequence belongs to the FBPase class 1 family. In terms of assembly, homotetramer. It depends on Mg(2+) as a cofactor.

The protein localises to the cytoplasm. The catalysed reaction is beta-D-fructose 1,6-bisphosphate + H2O = beta-D-fructose 6-phosphate + phosphate. It functions in the pathway carbohydrate biosynthesis; gluconeogenesis. This Leptospira interrogans serogroup Icterohaemorrhagiae serovar copenhageni (strain Fiocruz L1-130) protein is Fructose-1,6-bisphosphatase class 1.